A 400-amino-acid chain; its full sequence is Formate-dependent phosphoribosylglycinamide formyltransferase (400 aa).

N(1)-(5-phospho-beta-D-ribosyl)glycinamide contacts are provided by residues 22–23 (EL) and Glu82. ATP contacts are provided by residues Arg115, Lys156, 161–166 (SSGKGQ), 196–199 (EGFI), and Glu204. Positions 120–309 (RLAAETLGLP…EFALHARAIL (190 aa)) constitute an ATP-grasp domain. Residues Glu268 and Glu280 each coordinate Mg(2+). N(1)-(5-phospho-beta-D-ribosyl)glycinamide-binding positions include Asp287, Lys361, and 368–369 (RR).

Belongs to the PurK/PurT family. In terms of assembly, homodimer.

The catalysed reaction is N(1)-(5-phospho-beta-D-ribosyl)glycinamide + formate + ATP = N(2)-formyl-N(1)-(5-phospho-beta-D-ribosyl)glycinamide + ADP + phosphate + H(+). The protein operates within purine metabolism; IMP biosynthesis via de novo pathway; N(2)-formyl-N(1)-(5-phospho-D-ribosyl)glycinamide from N(1)-(5-phospho-D-ribosyl)glycinamide (formate route): step 1/1. Involved in the de novo purine biosynthesis. Catalyzes the transfer of formate to 5-phospho-ribosyl-glycinamide (GAR), producing 5-phospho-ribosyl-N-formylglycinamide (FGAR). Formate is provided by PurU via hydrolysis of 10-formyl-tetrahydrofolate. This Xanthomonas oryzae pv. oryzae (strain KACC10331 / KXO85) protein is Formate-dependent phosphoribosylglycinamide formyltransferase.